The following is a 237-amino-acid chain: MAETTKLQLFVKASEDGESVGHCPSCQRLFMVLLLKGVPFTLTTVDTRRALDVLKDFAPGSQLPILLYDGDVKTDTLQIEEFLEETLGPPDFPSLAPRYRESNTAGNDIFHKFSAFIKNPVPTQDNALYQQLLRALTRLDSYLRAPLDHELAQEPHLRESHRRFLDGDQFTLADCSLLPKLHIVDTVCAHFRQLPIPAELSCVRRYLDSALQKKEFKYTCPHSAEILAAYQPAVHPR.

Residues 1-89 are required for insertion into the membrane; that stretch reads MAETTKLQLF…EEFLEETLGP (89 aa). In terms of domain architecture, GST N-terminal spans 13–91; that stretch reads ASEDGESVGH…FLEETLGPPD (79 aa). Residues 23-26 carry the G-site motif; sequence CPSC. A disulfide bridge links cysteine 23 with cysteine 26. A helical membrane pass occupies residues 25-45; it reads SCQRLFMVLLLKGVPFTLTTV. The region spanning 69–236 is the GST C-terminal domain; sequence DGDVKTDTLQ…LAAYQPAVHP (168 aa). At serine 160 the chain carries Phosphoserine.

It belongs to the chloride channel CLIC family. Associated with the C-terminal of MAPK15.

The protein localises to the nucleus. The protein resides in the membrane. It localises to the cell membrane. Its subcellular location is the cytoplasm. It is found in the secreted. The protein localises to the extracellular space. The protein resides in the extracellular matrix. It catalyses the reaction chloride(in) = chloride(out). In the soluble state, catalyzes glutaredoxin-like thiol disulfide exchange reactions with reduced glutathione as electron donor. Reduced in a glutathione-dependent way and secreted into the extracellular matrix where it activates TGM2 and promotes blood vessel growth during tissue remodeling as occurs in tumorigenesis. Can reduce specific cysteines in TGM2 and regulate cofactor binding. Can insert into membranes and form outwardly rectifying chloride ion channels. May participate in cellular growth control. The chain is Chloride intracellular channel protein 3 from Mus musculus (Mouse).